Reading from the N-terminus, the 115-residue chain is U3-lycotoxin-Ls1p (115 aa).

A signal peptide spans 1–20 (MKFVLLFGVLLVTLFSYSSA). The propeptide occupies 21-44 (EMFDDFDQADEDELLSLIEKEEAR). 4 disulfide bridges follow: C48–C63, C55–C72, C62–C87, and C74–C85.

The protein belongs to the neurotoxin 19 (CSTX) family. 01 subfamily. Expressed by the venom gland.

The protein localises to the secreted. This Lycosa singoriensis (Wolf spider) protein is U3-lycotoxin-Ls1p.